The following is an 83-amino-acid chain: Small ribosomal subunit protein eS21 (83 aa).

The protein belongs to the eukaryotic ribosomal protein eS21 family. Component of the 40S small ribosomal subunit. Interacts with sta.

The protein resides in the cytoplasm. It localises to the cytosol. It is found in the rough endoplasmic reticulum. Functionally, may be an associated component of the ribosome rather than a core structural subunit. May act as a translation initiation factor. Has a role in regulation of cell proliferation in the hematopoietic organs and the imaginal disks of larva. This Drosophila grimshawi (Hawaiian fruit fly) protein is Small ribosomal subunit protein eS21 (RpS21).